The primary structure comprises 717 residues: Amino-acid acetyltransferase, mitochondrial (717 aa).

A mitochondrion-targeting transit peptide spans 1–23; that stretch reads MFIWTKAPARGLGKASKILPKRD. The tract at residues 35-70 is disordered; that stretch reads KQFHTATTSVRRSSSSAKERQRAERQQLTRLLKESP. A compositionally biased stretch (low complexity) spans 39 to 50; the sequence is TATTSVRRSSSS. Residues 51-70 show a composition bias toward basic and acidic residues; sequence AKERQRAERQQLTRLLKESP. Residues 518-691 form the N-acetyltransferase domain; sequence NPSIELADDP…GDVDDAKKRD (174 aa).

This sequence belongs to the acetyltransferase family.

It localises to the mitochondrion. The enzyme catalyses L-glutamate + acetyl-CoA = N-acetyl-L-glutamate + CoA + H(+). Its pathway is amino-acid biosynthesis; L-arginine biosynthesis; N(2)-acetyl-L-ornithine from L-glutamate: step 1/4. In terms of biological role, N-acetylglutamate synthase involved in arginine biosynthesis. The sequence is that of Amino-acid acetyltransferase, mitochondrial (arg2) from Pyrenophora tritici-repentis (strain Pt-1C-BFP) (Wheat tan spot fungus).